Here is a 110-residue protein sequence, read N- to C-terminus: Large ribosomal subunit protein uL22 (110 aa).

It belongs to the universal ribosomal protein uL22 family. In terms of assembly, part of the 50S ribosomal subunit.

Functionally, this protein binds specifically to 23S rRNA; its binding is stimulated by other ribosomal proteins, e.g. L4, L17, and L20. It is important during the early stages of 50S assembly. It makes multiple contacts with different domains of the 23S rRNA in the assembled 50S subunit and ribosome. The globular domain of the protein is located near the polypeptide exit tunnel on the outside of the subunit, while an extended beta-hairpin is found that lines the wall of the exit tunnel in the center of the 70S ribosome. In Saccharophagus degradans (strain 2-40 / ATCC 43961 / DSM 17024), this protein is Large ribosomal subunit protein uL22.